The chain runs to 503 residues: L-amino-acid oxidase (503 aa).

The first 18 residues, 1–18, serve as a signal peptide directing secretion; it reads MNVFFMFSLLFLAALGSC. Cysteine 28 and cysteine 191 form a disulfide bridge. FAD-binding positions include 61 to 62, 81 to 82, arginine 89, and 105 to 108; these read MS, EA, and GPMR. Arginine 108 is a binding site for substrate. An N-linked (GlcNAc...) asparagine glycan is attached at asparagine 190. Histidine 241 is a binding site for substrate. FAD is bound at residue valine 279. Cysteine 349 and cysteine 430 form a disulfide bridge. Tyrosine 390 is a binding site for substrate. FAD is bound by residues glutamate 475 and 482 to 487; that span reads GWIDST. 482–483 lines the substrate pocket; it reads GW.

The protein belongs to the flavin monoamine oxidase family. FIG1 subfamily. In terms of assembly, homodimer; non-covalently linked. The cofactor is FAD. Post-translationally, N-glycosylated. The enzymatic activity is not affected by deglycosylation. In terms of tissue distribution, expressed by the venom gland.

The protein resides in the secreted. The catalysed reaction is an L-alpha-amino acid + O2 + H2O = a 2-oxocarboxylate + H2O2 + NH4(+). It carries out the reaction L-leucine + O2 + H2O = 4-methyl-2-oxopentanoate + H2O2 + NH4(+). It catalyses the reaction L-phenylalanine + O2 + H2O = 3-phenylpyruvate + H2O2 + NH4(+). The enzyme catalyses L-methionine + O2 + H2O = 4-methylsulfanyl-2-oxobutanoate + H2O2 + NH4(+). The catalysed reaction is L-isoleucine + O2 + H2O = (S)-3-methyl-2-oxopentanoate + H2O2 + NH4(+). Its function is as follows. Catalyzes an oxidative deamination of predominantly hydrophobic and aromatic L-amino acids, thus producing hydrogen peroxide that may contribute to the diverse toxic effects of this enzyme. Is highly active on L-Met, L-Leu, L-Phe and L-Ile. Exhibits diverse biological activities, such as antibacterial on both Gram-positive and Gram-negative bacteria and antiparasitic activities, as well as induction of platelet aggregation. Effects of snake L-amino oxidases on platelets are controversial, since they either induce aggregation or inhibit agonist-induced aggregation. These different effects are probably due to different experimental conditions. This protein may also have activities in hemorrhage, hemolysis, edema, and apoptosis. This is L-amino-acid oxidase from Bothrops pauloensis (Neuwied's lancehead).